We begin with the raw amino-acid sequence, 379 residues long: 3-dehydroquinate synthase (379 aa).

Residues 67–72, 101–105, 125–126, Lys-138, and Lys-147 each bind NAD(+); these read PGEKNK, GIVLD, and TT. Zn(2+) is bound by residues Glu-180, His-242, and His-258.

This sequence belongs to the sugar phosphate cyclases superfamily. Dehydroquinate synthase family. NAD(+) is required as a cofactor. Co(2+) serves as cofactor. Requires Zn(2+) as cofactor.

It localises to the cytoplasm. The catalysed reaction is 7-phospho-2-dehydro-3-deoxy-D-arabino-heptonate = 3-dehydroquinate + phosphate. The protein operates within metabolic intermediate biosynthesis; chorismate biosynthesis; chorismate from D-erythrose 4-phosphate and phosphoenolpyruvate: step 2/7. Its function is as follows. Catalyzes the conversion of 3-deoxy-D-arabino-heptulosonate 7-phosphate (DAHP) to dehydroquinate (DHQ). This is 3-dehydroquinate synthase from Chlamydia felis (strain Fe/C-56) (Chlamydophila felis).